The chain runs to 1108 residues: Probable arabinosyltransferase A (1108 aa).

13 helical membrane passes run 12-34 (IPRS…VPLL), 204-223 (IVMV…LAVL), 258-280 (VGLA…HVVG), 334-356 (VWMR…HWVL), 368-387 (ANRV…WLPF), 397-414 (IALG…AIAL), 421-443 (AVAV…AVAA), 463-482 (GLLA…LVVV), 531-553 (FAVL…RGHV), 582-604 (WAVQ…AFAC), 616-638 (TLYV…GWFY), 653-675 (IASH…LAAW), and 696-718 (VLAS…ASLT). The interval 804–825 (PGLVNSDASPNKPNVAYSDSAG) is disordered.

It belongs to the emb family.

It is found in the cell membrane. Its function is as follows. Arabinosyl transferase responsible for the polymerization of arabinose into the arabinan of arabinogalactan. This Mycobacterium avium protein is Probable arabinosyltransferase A (embA).